The primary structure comprises 1132 residues: Phytochrome B (1132 aa).

The span at 1-11 (MASGSRTKHSH) shows a compositional bias: basic residues. Residues 1-27 (MASGSRTKHSHQSGQGQVQAQSSGTSN) are disordered. Residues 12–26 (QSGQGQVQAQSSGTS) show a composition bias toward low complexity. Residues 231-409 (DVKLLCDTVV…AFGLQLNMEL (179 aa)) form the GAF domain. A phytochromobilin-binding site is contributed by C336. 2 PAS domains span residues 623-694 (VARE…LRGE) and 757-828 (DYKA…MIVL). The 221-residue stretch at 905 to 1125 (YLCQEIKSPL…LIILDLPMTR (221 aa)) folds into the Histidine kinase domain.

The protein belongs to the phytochrome family. In terms of assembly, homodimer. In terms of processing, contains one covalently linked phytochromobilin chromophore.

Regulatory photoreceptor which exists in two forms that are reversibly interconvertible by light: the Pr form that absorbs maximally in the red region of the spectrum and the Pfr form that absorbs maximally in the far-red region. Photoconversion of Pr to Pfr induces an array of morphogenic responses, whereas reconversion of Pfr to Pr cancels the induction of those responses. Pfr controls the expression of a number of nuclear genes including those encoding the small subunit of ribulose-bisphosphate carboxylase, chlorophyll A/B binding protein, protochlorophyllide reductase, rRNA, etc. It also controls the expression of its own gene(s) in a negative feedback fashion. The sequence is that of Phytochrome B (PHYB) from Nicotiana tabacum (Common tobacco).